The primary structure comprises 338 residues: Biotin synthase (338 aa).

A Radical SAM core domain is found at 59–284 (EEVEIEGIVS…RTTLRFAGGR (226 aa)). Positions 74, 78, and 81 each coordinate [4Fe-4S] cluster. 3 residues coordinate [2Fe-2S] cluster: cysteine 117, cysteine 209, and arginine 279.

This sequence belongs to the radical SAM superfamily. Biotin synthase family. Homodimer. [4Fe-4S] cluster is required as a cofactor. It depends on [2Fe-2S] cluster as a cofactor.

The catalysed reaction is (4R,5S)-dethiobiotin + (sulfur carrier)-SH + 2 reduced [2Fe-2S]-[ferredoxin] + 2 S-adenosyl-L-methionine = (sulfur carrier)-H + biotin + 2 5'-deoxyadenosine + 2 L-methionine + 2 oxidized [2Fe-2S]-[ferredoxin]. It functions in the pathway cofactor biosynthesis; biotin biosynthesis; biotin from 7,8-diaminononanoate: step 2/2. In terms of biological role, catalyzes the conversion of dethiobiotin (DTB) to biotin by the insertion of a sulfur atom into dethiobiotin via a radical-based mechanism. This chain is Biotin synthase, found in Corynebacterium urealyticum (strain ATCC 43042 / DSM 7109).